A 310-amino-acid polypeptide reads, in one-letter code: Methionyl-tRNA formyltransferase (310 aa).

111–114 (SLLP) lines the (6S)-5,6,7,8-tetrahydrofolate pocket.

The protein belongs to the Fmt family.

It carries out the reaction L-methionyl-tRNA(fMet) + (6R)-10-formyltetrahydrofolate = N-formyl-L-methionyl-tRNA(fMet) + (6S)-5,6,7,8-tetrahydrofolate + H(+). In terms of biological role, attaches a formyl group to the free amino group of methionyl-tRNA(fMet). The formyl group appears to play a dual role in the initiator identity of N-formylmethionyl-tRNA by promoting its recognition by IF2 and preventing the misappropriation of this tRNA by the elongation apparatus. The chain is Methionyl-tRNA formyltransferase from Rhodopseudomonas palustris (strain BisB5).